A 506-amino-acid polypeptide reads, in one-letter code: Probable Xaa-Pro aminopeptidase PAAG_05466 (506 aa).

The Mn(2+) site is built by aspartate 285, aspartate 296, glutamate 433, and glutamate 471.

This sequence belongs to the peptidase M24B family. Mn(2+) is required as a cofactor.

The enzyme catalyses Release of any N-terminal amino acid, including proline, that is linked to proline, even from a dipeptide or tripeptide.. Its function is as follows. Catalyzes the removal of a penultimate prolyl residue from the N-termini of peptides. The protein is Probable Xaa-Pro aminopeptidase PAAG_05466 of Paracoccidioides lutzii (strain ATCC MYA-826 / Pb01) (Paracoccidioides brasiliensis).